The chain runs to 410 residues: Pectate lyase PEL9 (410 aa).

The first 18 residues, 1-18 (MMGKSVWVFAALFPAVLA), serve as a signal peptide directing secretion. Ca(2+) is bound by residues Asp-191, Asp-215, Asp-216, and Asp-219. Asn-234 is a glycosylation site (N-linked (GlcNAc...) asparagine). Catalysis depends on Lys-271, which acts as the Proton acceptor. The segment covering 342 to 351 (GEAPTSLSDE) has biased composition (polar residues). Disordered stretches follow at residues 342–361 (GEAPTSLSDEQISDGNSWDG) and 381–410 (ERNADGTIEPSGFLLPADGEEIGATTDWSA).

This sequence belongs to the polysaccharide lyase 9 family. It depends on Ca(2+) as a cofactor.

It is found in the secreted. The catalysed reaction is Eliminative cleavage of (1-&gt;4)-alpha-D-galacturonan to give oligosaccharides with 4-deoxy-alpha-D-galact-4-enuronosyl groups at their non-reducing ends.. With respect to regulation, inhibited by iron ions. Activated in presence of the surfactant polysorbate 20, while inhibited in the presence of Triton X-100 and sodium dodecyl sulfate. Inhibited in presence of the organic solvents methanol, ethanol, propan-2-ol and acetone. In terms of biological role, presents an endo-cleaving activity on the homogalacturonan (HG) region in pectin. Active on homogalacturonan with a degree of polymerization above 4, and does not appear to be affected by the degree of methylation of the substrate. Does not degrade linear rhamnogalacturonan. This Emericella nidulans (strain FGSC A4 / ATCC 38163 / CBS 112.46 / NRRL 194 / M139) (Aspergillus nidulans) protein is Pectate lyase PEL9.